Consider the following 141-residue polypeptide: Hemoglobin subunit alpha (141 aa).

Residues valine 1–arginine 141 enclose the Globin domain. Residue serine 3 is modified to Phosphoserine. Lysine 7 and lysine 11 each carry N6-succinyllysine. Lysine 16 is modified (N6-acetyllysine; alternate). Lysine 16 carries the N6-succinyllysine; alternate modification. Tyrosine 24 is subject to Phosphotyrosine. Phosphoserine is present on serine 35. The residue at position 40 (lysine 40) is an N6-succinyllysine. Position 49 is a phosphoserine (serine 49). Histidine 58 lines the O2 pocket. Histidine 87 is a heme b binding site. Serine 102 carries the post-translational modification Phosphoserine. Threonine 108 carries the post-translational modification Phosphothreonine. Serine 124 and serine 131 each carry phosphoserine. Phosphothreonine occurs at positions 134 and 137. Serine 138 carries the post-translational modification Phosphoserine.

Belongs to the globin family. In terms of assembly, heterotetramer of two alpha chains and two beta chains. In terms of tissue distribution, red blood cells.

Its function is as follows. Involved in oxygen transport from the lung to the various peripheral tissues. Hemopressin acts as an antagonist peptide of the cannabinoid receptor CNR1. Hemopressin-binding efficiently blocks cannabinoid receptor CNR1 and subsequent signaling. The protein is Hemoglobin subunit alpha (HBA) of Saguinus mystax (Moustached tamarin).